The following is a 276-amino-acid chain: Kallikrein-11 (276 aa).

A signal peptide spans 1–44 (MRRLKSDWKLSTETREPGARPALLQARMILRLIALALVTGHVGG). Residues 45-47 (ETR) constitute a propeptide, activation peptide. The Peptidase S1 domain occupies 48-274 (IIKGYECRPH…YFNWIHEVMR (227 aa)). Disulfide bonds link Cys54-Cys189, Cys73-Cys89, Cys168-Cys235, Cys200-Cys214, and Cys225-Cys250. His88 serves as the catalytic Charge relay system. Asn125 carries N-linked (GlcNAc...) asparagine glycosylation. Residue Asp136 is the Charge relay system of the active site. N-linked (GlcNAc...) asparagine glycans are attached at residues Asn191 and Asn207. Catalysis depends on Ser229, which acts as the Charge relay system. The N-linked (GlcNAc...) asparagine glycan is linked to Asn236.

It belongs to the peptidase S1 family. Kallikrein subfamily. Expressed in brain and prostate (isoform 1) and prostate (isoform 2).

Its subcellular location is the secreted. Its function is as follows. Possible multifunctional protease. Efficiently cleaves 'bz-Phe-Arg-4-methylcoumaryl-7-amide', a kallikrein substrate, and weakly cleaves other substrates for kallikrein and trypsin. The chain is Kallikrein-11 (Klk11) from Mus musculus (Mouse).